Consider the following 3977-residue polypeptide: Hybrid PKS-NRPS synthetase gkaA (3977 aa).

One can recognise a Ketosynthase family 3 (KS3) domain in the interval 4-441; that stretch reads EEPIAVIGSG…GTNAHVILEN (438 aa). Residues Cys177, His316, and His361 each act as for beta-ketoacyl synthase activity in the active site. A Malonyl-CoA:ACP transacylase (MAT) domain is found at 551-867; it reads VFTGQGAQWP…TGVIHRGKND (317 aa). The segment at 937–1072 is N-terminal hotdog fold; that stretch reads NPLLGTRTTD…GRITVTLGES (136 aa). The 305-residue stretch at 937-1241 folds into the PKS/mFAS DH domain; that stretch reads NPLLGTRTTD…VVAFSEATAD (305 aa). His969 (proton acceptor; for dehydratase activity) is an active-site residue. Residues 1087 to 1241 form a C-terminal hotdog fold region; that stretch reads LVSIPQDRFY…VVAFSEATAD (155 aa). Asp1147 functions as the Proton donor; for dehydratase activity in the catalytic mechanism. The interval 1286-1580 is methyltransferase (cMeT) domain; that stretch reads YMKKTVEEFP…FSGIDSSTPE (295 aa). Residues 2128-2301 enclose the Ketoreductase (KR) domain; that stretch reads TYVLFGLTSD…AASILHIGAV (174 aa). Residues 2409-2490 form the Carrier 1 domain; it reads SEVFEIISGA…QLLEYAIDNM (82 aa). An O-(pantetheine 4'-phosphoryl)serine modification is found at Ser2450. A disordered region spans residues 2497 to 2542; the sequence is HSNGEQGTVSDSGSTNIQLTPASTPSVPSVNLASDSTGSSQVGEDV. Over residues 2499–2538 the composition is skewed to polar residues; sequence NGEQGTVSDSGSTNIQLTPASTPSVPSVNLASDSTGSSQV. Residues 2584-3018 form a condensation region; sequence EKIIPMSPGQ…LKDISLFSKE (435 aa). Residues 3048-3437 are adenylation; it reads IAEHPDTISI…GALEILGRID (390 aa). The Carrier 2 domain maps to 3552-3632; the sequence is FSLTPTEDKL…AMASLITPAS (81 aa). Ser3592 carries the O-(pantetheine 4'-phosphoryl)serine modification. The Thioester reductase (TE) domain occupies 3672–3890; that stretch reads LTGATGFLGH…FVDLVSVQNV (219 aa).

This sequence in the C-terminal section; belongs to the NRP synthetase family. It depends on pantetheine 4'-phosphate as a cofactor.

Its pathway is mycotoxin biosynthesis. Hybrid PKS-NRPS synthetase; part of the gene cluster that mediates the biosynthesis of GKK1032, fungal natural products containing a macrocyclic para-cyclophane connected to a decahydrofluorene ring system that show potent antitumor activities. Within the pathway, the PKS-NRPS gkaA, with the help of the trans-enoyl reductase gkaC, synthesize the polyketide-tyrosyl acyl thioester product which can be reductively off-loaded by the terminal reductase (R) domain in gkaA. The PKS module of gkaA acts in combination with the trans-acting enoyl reductase gkaC to produce a methylated polyketide attached to the ACP domain. In parallel, the adenylation (A) domain of the NRPS module activated L-tyrosine, which is then transferred to the ACP domain. The condensation (C) domain subsequently links this group to the polyketide chain, forming an enzyme-bound amide. The alpha/beta hydrolase gkaG is then required to catalyze the subsequent Knoevenagel condensation that affords the 3-pyrrolin-2-one ring, whereas the three proteins gkaB, gkadX and gkaZ then function synergistically to form the cyclophane. This Penicillium citrinum protein is Hybrid PKS-NRPS synthetase gkaA.